The chain runs to 310 residues: NADP-dependent D-sorbitol-6-phosphate dehydrogenase (310 aa).

The active-site Proton donor is Tyr-48. His-108 contacts substrate. Position 210–272 (210–272) interacts with NADP(+); the sequence is TPLGGAAANK…SSKIQRLKEN (63 aa).

It belongs to the aldo/keto reductase family.

It carries out the reaction D-sorbitol 6-phosphate + NADP(+) = aldehydo-D-glucose 6-phosphate + NADPH + H(+). Its function is as follows. Synthesizes sorbitol-6-phosphate, a key intermediate in the synthesis of sorbitol which is a major photosynthetic product in many members of the Rosaceae family. The chain is NADP-dependent D-sorbitol-6-phosphate dehydrogenase (S6PDH) from Malus domestica (Apple).